A 33-amino-acid chain; its full sequence is Potassium channel toxin alpha-KTx 10.4 (33 aa).

Cystine bridges form between Cys3–Cys22, Cys8–Cys27, and Cys12–Cys29.

The protein belongs to the short scorpion toxin superfamily. Potassium channel inhibitor family. Alpha-KTx 10 subfamily. As to expression, expressed by the venom gland.

It localises to the secreted. Functionally, blocks human voltage-gated potassium channel Kv1.2/KCNA2 (IC(50)=3.6 nM) and Kv1.3/KCNA3 (IC(50)=72 nM). The polypeptide is Potassium channel toxin alpha-KTx 10.4 (Centruroides tecomanus (Scorpion)).